The following is a 475-amino-acid chain: Adenosylhomocysteinase (475 aa).

Residues T60, D133, and E198 each contribute to the substrate site. An NAD(+)-binding site is contributed by 199–201 (TTT). 2 residues coordinate substrate: K228 and D232. NAD(+)-binding positions include N233, 262-267 (GYGDVG), E285, N320, 341-343 (IGH), and N389.

Belongs to the adenosylhomocysteinase family. It depends on NAD(+) as a cofactor.

The protein resides in the cytoplasm. The enzyme catalyses S-adenosyl-L-homocysteine + H2O = L-homocysteine + adenosine. It participates in amino-acid biosynthesis; L-homocysteine biosynthesis; L-homocysteine from S-adenosyl-L-homocysteine: step 1/1. In terms of biological role, may play a key role in the regulation of the intracellular concentration of adenosylhomocysteine. This chain is Adenosylhomocysteinase, found in Syntrophotalea carbinolica (strain DSM 2380 / NBRC 103641 / GraBd1) (Pelobacter carbinolicus).